The chain runs to 571 residues: Isocitrate dehydrogenase kinase/phosphatase (571 aa).

Residues 318–324 (APGVRGM) and K339 each bind ATP. The active site involves D374.

This sequence belongs to the AceK family.

It localises to the cytoplasm. The catalysed reaction is L-seryl-[isocitrate dehydrogenase] + ATP = O-phospho-L-seryl-[isocitrate dehydrogenase] + ADP + H(+). In terms of biological role, bifunctional enzyme which can phosphorylate or dephosphorylate isocitrate dehydrogenase (IDH) on a specific serine residue. This is a regulatory mechanism which enables bacteria to bypass the Krebs cycle via the glyoxylate shunt in response to the source of carbon. When bacteria are grown on glucose, IDH is fully active and unphosphorylated, but when grown on acetate or ethanol, the activity of IDH declines drastically concomitant with its phosphorylation. The protein is Isocitrate dehydrogenase kinase/phosphatase of Pseudomonas putida (strain ATCC 700007 / DSM 6899 / JCM 31910 / BCRC 17059 / LMG 24140 / F1).